A 244-amino-acid chain; its full sequence is Large ribosomal subunit protein uL2 (244 aa).

Basic residues-rich tracts occupy residues 1 to 12 (MGKRPLVRRRGR) and 234 to 244 (KTGRARIKERK). 2 disordered regions span residues 1-30 (MGKRPLVRRRGRGGNQFRSTSTGKVGTKAN) and 203-244 (HGGG…KERK).

Belongs to the universal ribosomal protein uL2 family. Part of the 50S ribosomal subunit. Forms a bridge to the 30S subunit in the 70S ribosome.

Functionally, one of the primary rRNA binding proteins. Required for association of the 30S and 50S subunits to form the 70S ribosome, for tRNA binding and peptide bond formation. It has been suggested to have peptidyltransferase activity; this is somewhat controversial. Makes several contacts with the 16S rRNA in the 70S ribosome. In Nitrosopumilus maritimus (strain SCM1), this protein is Large ribosomal subunit protein uL2.